Here is a 236-residue protein sequence, read N- to C-terminus: Cytochrome c biogenesis ATP-binding export protein CcmA (236 aa).

One can recognise an ABC transporter domain in the interval 14-235 (LEATGLQVAR…SAGDRVTGTE (222 aa)). An ATP-binding site is contributed by 46–53 (GANGSGKT).

The protein belongs to the ABC transporter superfamily. CcmA exporter (TC 3.A.1.107) family. As to quaternary structure, the complex is composed of two ATP-binding proteins (CcmA) and two transmembrane proteins (CcmB).

The protein localises to the cell inner membrane. It catalyses the reaction heme b(in) + ATP + H2O = heme b(out) + ADP + phosphate + H(+). Functionally, part of the ABC transporter complex CcmAB involved in the biogenesis of c-type cytochromes; once thought to export heme, this seems not to be the case, but its exact role is uncertain. Responsible for energy coupling to the transport system. The polypeptide is Cytochrome c biogenesis ATP-binding export protein CcmA (Alkalilimnicola ehrlichii (strain ATCC BAA-1101 / DSM 17681 / MLHE-1)).